Here is a 510-residue protein sequence, read N- to C-terminus: Zinc metalloproteinase (510 aa).

The signal sequence occupies residues 1–24 (MKSKLICIIMVIAFQAHFTMTVKA). The propeptide occupies 25-200 (DSVGEEKLQN…ILKKQNMLSE (176 aa)). H349 is a Zn(2+) binding site. E350 is an active-site residue. Zn(2+)-binding residues include H353 and E373. H437 acts as the Proton donor in catalysis.

The protein belongs to the peptidase M4 family. Requires Zn(2+) as cofactor.

The protein resides in the secreted. In terms of biological role, probably linked to the pathogenesis of listerial infection. The polypeptide is Zinc metalloproteinase (mpl) (Listeria monocytogenes serovar 1/2a (strain ATCC BAA-679 / EGD-e)).